A 396-amino-acid polypeptide reads, in one-letter code: Phosphoglycerate kinase (396 aa).

Residues 21 to 23 (DFN), Arg-36, 59 to 62 (HLGK), Arg-119, and Arg-156 each bind substrate. ATP contacts are provided by residues Lys-206, Gly-294, Glu-325, and 352-355 (GGDS).

The protein belongs to the phosphoglycerate kinase family. As to quaternary structure, monomer.

Its subcellular location is the cytoplasm. The catalysed reaction is (2R)-3-phosphoglycerate + ATP = (2R)-3-phospho-glyceroyl phosphate + ADP. Its pathway is carbohydrate degradation; glycolysis; pyruvate from D-glyceraldehyde 3-phosphate: step 2/5. This chain is Phosphoglycerate kinase, found in Listeria monocytogenes serotype 4b (strain CLIP80459).